A 969-amino-acid polypeptide reads, in one-letter code: RNA polymerase-associated protein RapA (969 aa).

The Helicase ATP-binding domain maps to 164 to 334 (EVGRRHAPRV…FARLRLLDSD (171 aa)). Position 177–184 (177–184 (DEVGLGKT)) interacts with ATP. The short motif at 280 to 283 (DEAH) is the DEAH box element. The Helicase C-terminal domain occupies 492 to 668 (RVNWLLEKLK…GSNEALDDVI (177 aa)).

This sequence belongs to the SNF2/RAD54 helicase family. RapA subfamily. As to quaternary structure, interacts with the RNAP. Has a higher affinity for the core RNAP than for the holoenzyme. Its ATPase activity is stimulated by binding to RNAP.

Transcription regulator that activates transcription by stimulating RNA polymerase (RNAP) recycling in case of stress conditions such as supercoiled DNA or high salt concentrations. Probably acts by releasing the RNAP, when it is trapped or immobilized on tightly supercoiled DNA. Does not activate transcription on linear DNA. Probably not involved in DNA repair. The chain is RNA polymerase-associated protein RapA from Vibrio vulnificus (strain CMCP6).